We begin with the raw amino-acid sequence, 205 residues long: Troponin I, cardiac muscle (205 aa).

The segment at 1-38 (MADQSGNAAPPPVRRRSSANYRAYATEPHAKKKSKISA) is disordered. Ala2 is subject to N-acetylalanine. The residue at position 5 (Ser5) is a Phosphoserine. Ser17 and Ser18 each carry phosphoserine; by PKA and PKD/PRKD1. Tyr21 is subject to Phosphotyrosine. Thr26 bears the Phosphothreonine; by STK4/MST1 mark. The involved in binding TNC stretch occupies residues 27–74 (EPHAKKKSKISASRKLQLKTLMLQIAKQELEREAVERRGEKGRALSTR). A phosphoserine; by PKC/PRKCE mark is found at Ser37 and Ser39. Phosphothreonine; by STK4/MST1 is present on Thr46. At Ser72 the chain carries Phosphoserine. Thr73 is modified (phosphothreonine). The involved in binding TNC and actin stretch occupies residues 124–145 (NQKIFDLRGKFKRPTLRRVRIS). A Phosphothreonine; by STK4/MST1 modification is found at Thr138. Ser145 is subject to Phosphoserine; by PAK3. A Phosphothreonine modification is found at Thr176. A Phosphoserine modification is found at Ser194.

The protein belongs to the troponin I family. As to quaternary structure, binds to actin and tropomyosin. Interacts with TRIM63. Interacts with STK4/MST1. In terms of processing, phosphorylated at Ser-17 and Ser-18 by PRKD1; phosphorylation reduces myofilament calcium sensitivity. Phosphorylated preferentially at Thr-26. Phosphorylation by STK4/MST1 alters its binding affinity to TNNC1 (cardiac Tn-C) and TNNT2 (cardiac Tn-T). Phosphorylated at Ser-37 and Ser-39 by PRKCE; phosphorylation increases myocardium contractile dysfunction.

In terms of biological role, troponin I is the inhibitory subunit of troponin, the thin filament regulatory complex which confers calcium-sensitivity to striated muscle actomyosin ATPase activity. This Equus caballus (Horse) protein is Troponin I, cardiac muscle (TNNI3).